The following is a 200-amino-acid chain: Small ribosomal subunit protein uS4 (200 aa).

Over residues 1-13 the composition is skewed to basic residues; that stretch reads MARYRGPKQKIAR. The tract at residues 1-44 is disordered; that stretch reads MARYRGPKQKIARRFKEPIFGPSKALERKPYPPGQHGQSRRRRE. The 63-residue stretch at 92–154 folds into the S4 RNA-binding domain; that stretch reads ARLDNTVFRM…SQDLEVIQTN (63 aa).

Belongs to the universal ribosomal protein uS4 family. In terms of assembly, part of the 30S ribosomal subunit. Contacts protein S5. The interaction surface between S4 and S5 is involved in control of translational fidelity.

In terms of biological role, one of the primary rRNA binding proteins, it binds directly to 16S rRNA where it nucleates assembly of the body of the 30S subunit. With S5 and S12 plays an important role in translational accuracy. This Salinibacter ruber (strain DSM 13855 / M31) protein is Small ribosomal subunit protein uS4.